A 151-amino-acid polypeptide reads, in one-letter code: Calmodulin (151 aa).

4 consecutive EF-hand domains span residues 10 to 45, 46 to 81, 83 to 118, and 119 to 151; these read EQIS…LGQN, PTEA…KMKD, DSEE…LGEK, and LTDE…MLSK. Positions 23, 25, 27, 29, 34, 59, 61, 63, 65, 70, 96, 98, 100, 107, 132, 134, 136, and 143 each coordinate Ca(2+).

It belongs to the calmodulin family.

Calmodulin mediates the control of a large number of enzymes, ion channels and other proteins by Ca(2+). Among the enzymes to be stimulated by the calmodulin-Ca(2+) complex are a number of protein kinases and phosphatases. This chain is Calmodulin, found in Pneumocystis carinii.